We begin with the raw amino-acid sequence, 580 residues long: Tyrosyl-DNA phosphodiesterase 1 (580 aa).

The tract at residues 65-117 (ATNKEQEAHSSSSKPAVTAPVASGSSSSGSLDTNPSGSSASGPAASQDTSNLA) is disordered. The segment covering 87–110 (SGSSSSGSLDTNPSGSSASGPAAS) has biased composition (low complexity). Histidine 248 acts as the Nucleophile in catalysis. Residue lysine 250 coordinates substrate. Positions 387–390 (SIGS) are interaction with DNA. Catalysis depends on histidine 479, which acts as the Proton donor/acceptor. Residue lysine 481 participates in substrate binding.

Belongs to the tyrosyl-DNA phosphodiesterase family. As to expression, expressed in the body and at higher levels in the head. Expressed in the delaminating neuroblasts and a few ganglion mother cells in stage 11-14 embryonic central nervous system. Weak expression is seen in gonads at stage 16. Expressed in the brain; expression is regulated by DIP2.

It localises to the nucleus. The protein localises to the cytoplasm. In terms of biological role, DNA repair enzyme that can remove a variety of covalent adducts from DNA through hydrolysis of a 3'-phosphodiester bond, giving rise to DNA with a free 3' phosphate. Catalyzes the hydrolysis of dead-end complexes between DNA and the topoisomerase I active site tyrosine residue. Hydrolyzes 3'-phosphoglycolates on protruding 3' ends on DNA double-strand breaks due to DNA damage by radiation and free radicals. Acts on blunt-ended double-strand DNA breaks and on single-stranded DNA. May have low 3'exonuclease activity and may be able to remove a single nucleoside from the 3'end of DNA and RNA molecules with 3'hydroxyl groups. Has no exonuclease activity towards DNA or RNA with a 3'phosphate. Required for normal polarization of epidermal cells, correct subcellular location of the Crb complex to the apical lateral membrane, and for normal neuronal development during embryonic development. Contributes to maintenance of epithelial cells in response to topoisomerase-1-mediated and oxidative DNA damage. Required for precise axonal bifurcation in mushroom body neurons. Required for maintenance of normal neuronal function. This chain is Tyrosyl-DNA phosphodiesterase 1, found in Drosophila melanogaster (Fruit fly).